The chain runs to 398 residues: Phosphoglycerate kinase (398 aa).

Substrate-binding positions include 21–23, Arg-36, 59–62, Arg-119, and Arg-157; these read DFN and HLGR. Residues Lys-208, Gly-296, Glu-327, and 354–357 each bind ATP; that span reads GGDS.

Belongs to the phosphoglycerate kinase family. In terms of assembly, monomer.

It localises to the cytoplasm. The catalysed reaction is (2R)-3-phosphoglycerate + ATP = (2R)-3-phospho-glyceroyl phosphate + ADP. The protein operates within carbohydrate degradation; glycolysis; pyruvate from D-glyceraldehyde 3-phosphate: step 2/5. This chain is Phosphoglycerate kinase, found in Streptococcus equi subsp. equi (strain 4047).